We begin with the raw amino-acid sequence, 269 residues long: Proline-rich protein 7 (269 aa).

At 1 to 9 (MVMSQGTYT) the chain is on the extracellular side. The tract at residues 1–44 (MVMSQGTYTFLTCFAGFWLIWGLIVLLCCFCSFLRRRLKRRQEE) is required for interaction with NMDA receptors. The tract at residues 2-39 (VMSQGTYTFLTCFAGFWLIWGLIVLLCCFCSFLRRRLK) is required for membrane localization. A helical; Signal-anchor for type III membrane protein transmembrane segment spans residues 10–30 (FLTCFAGFWLIWGLIVLLCCF). Residues 31–269 (CSFLRRRLKR…IPLFGRTTAV (239 aa)) lie on the Cytoplasmic side of the membrane. 2 disordered regions span residues 63–83 (GSLAGSPPGLAPPPPPHRSRL) and 97–121 (PLLHHGPAPPHAHPHPHHHALPHPP). Phosphoserine is present on Ser-64. A compositionally biased stretch (basic residues) spans 108-117 (AHPHPHHHAL). Residues 146-166 (PCYEEAVLMAEPPPPYSEVLT) are required for internalization. Positions 146-269 (PCYEEAVLMA…IPLFGRTTAV (124 aa)) are required for apoptosis induction. The short motif at 267–269 (TAV) is the PDZ-binding element.

As to quaternary structure, forms a complex with NMDA receptor zeta subunit GRIN1 and epsilon subunit GRIN2B. Interacts with GRIN2B. Interacts with GRIN1; the interaction is reduced upon NMDA receptor activity. Found in a postsynaptic membrane complex with DLG4 and GRIN1. Interacts with DLG4 (via PDZ3 domain and to lesser degree via PDZ2 domain). Interacts with JUN. Found in a complex with JUN and FBXW7. Interacts with JUN and FBXW7; the interaction inhibits ubiquitination-mediated JUN degradation promoting its phosphorylation and transcriptional activity. Interacts with SRC. Palmitoylated. Post-translationally, tyrosine phosphorylated, possibly by SRC. Highly expressed in brain, moderately expressed in lymph nodes and T cells and low expression in thymus and spleen. Expressed in single positive progenitor thymocytes, particularly in CD8 single positive thymocytes.

It localises to the cell membrane. Its subcellular location is the postsynaptic cell membrane. The protein resides in the postsynaptic density membrane. It is found in the cytoplasm. The protein localises to the perinuclear region. It localises to the synapse. Its subcellular location is the cell projection. The protein resides in the dendrite. It is found in the nucleus. Acts as a synapse-to-nucleus messenger to promote NMDA receptor-mediated excitotoxicity in neurons in a JUN-dependent manner. Inhibits ubiquitination-mediated degradation and promotes phosphorylation and transcriptional activity of transcription factor JUN. Might play a redundant role in the regulation of T cell receptor signaling. Might promote apoptosis in T cells. This Mus musculus (Mouse) protein is Proline-rich protein 7 (Prr7).